Reading from the N-terminus, the 264-residue chain is MQLFPVMLATLCIVLQLLIGSSALATTNRHVSNSHWLPAVATWYGSPNGDGSDGGACGYGTLVDVKPLHARVGAVNPILFKNGEGCGACYKVRCLDKSICSRRAVTVIITDECPGCSKTSTHFDLSGAVFGRLAIAGESGPLRNRGLIPVIYRRTACKYRGKNIAFHVNEGSTDFWLSLLVEFEDGEGDIGSMHIRQAGAREWLEMKHVWGANWCIIGGPLKGPFSIKLTTLSAGKTLSATDVVPRNWAPKATYSSRLNFSPVL.

Positions Met1–Ala25 are cleaved as a signal peptide. The 109-residue stretch at Gly54–Lys162 folds into the Expansin-like EG45 domain. 3 cysteine pairs are disulfide-bonded: Cys57–Cys86, Cys89–Cys157, and Cys94–Cys100. Residues Phe175–Ser256 enclose the Expansin-like CBD domain.

Belongs to the expansin family. Expansin B subfamily.

It is found in the secreted. The protein localises to the cell wall. The protein resides in the membrane. May cause loosening and extension of plant cell walls by disrupting non-covalent bonding between cellulose microfibrils and matrix glucans. No enzymatic activity has been found. This Arabidopsis thaliana (Mouse-ear cress) protein is Expansin-B3 (EXPB3).